A 345-amino-acid chain; its full sequence is Biotin synthase (345 aa).

Residues 66-291 enclose the Radical SAM core domain; sequence PEVEIEGIIS…RTILRFAGGR (226 aa). Residues C81, C85, and C88 each coordinate [4Fe-4S] cluster. [2Fe-2S] cluster-binding residues include C124, C157, C216, and R286.

It belongs to the radical SAM superfamily. Biotin synthase family. Homodimer. It depends on [4Fe-4S] cluster as a cofactor. The cofactor is [2Fe-2S] cluster.

The catalysed reaction is (4R,5S)-dethiobiotin + (sulfur carrier)-SH + 2 reduced [2Fe-2S]-[ferredoxin] + 2 S-adenosyl-L-methionine = (sulfur carrier)-H + biotin + 2 5'-deoxyadenosine + 2 L-methionine + 2 oxidized [2Fe-2S]-[ferredoxin]. The protein operates within cofactor biosynthesis; biotin biosynthesis; biotin from 7,8-diaminononanoate: step 2/2. In terms of biological role, catalyzes the conversion of dethiobiotin (DTB) to biotin by the insertion of a sulfur atom into dethiobiotin via a radical-based mechanism. The polypeptide is Biotin synthase (Mycobacterium leprae (strain Br4923)).